The primary structure comprises 446 residues: Tubulin beta-2 chain (446 aa).

Glutamine 11, glutamate 69, serine 138, glycine 142, threonine 143, glycine 144, asparagine 204, and asparagine 226 together coordinate GTP. Glutamate 69 contributes to the Mg(2+) binding site. The disordered stretch occupies residues 424–446 (QYQEATADEEGEFDEDEEGGGDE). Acidic residues predominate over residues 429 to 446 (TADEEGEFDEDEEGGGDE).

Belongs to the tubulin family. In terms of assembly, dimer of alpha and beta chains. A typical microtubule is a hollow water-filled tube with an outer diameter of 25 nm and an inner diameter of 15 nM. Alpha-beta heterodimers associate head-to-tail to form protofilaments running lengthwise along the microtubule wall with the beta-tubulin subunit facing the microtubule plus end conferring a structural polarity. Microtubules usually have 13 protofilaments but different protofilament numbers can be found in some organisms and specialized cells. Mg(2+) is required as a cofactor. As to expression, testis specific.

The protein resides in the cytoplasm. Its subcellular location is the cytoskeleton. Tubulin is the major constituent of microtubules, a cylinder consisting of laterally associated linear protofilaments composed of alpha- and beta-tubulin heterodimers. Microtubules grow by the addition of GTP-tubulin dimers to the microtubule end, where a stabilizing cap forms. Below the cap, tubulin dimers are in GDP-bound state, owing to GTPase activity of alpha-tubulin. This Drosophila melanogaster (Fruit fly) protein is Tubulin beta-2 chain (betaTub85D).